An 85-amino-acid chain; its full sequence is Small ribosomal subunit protein bS18c (85 aa).

It belongs to the bacterial ribosomal protein bS18 family. Part of the 30S ribosomal subunit.

The protein localises to the plastid. Its subcellular location is the chloroplast. The protein is Small ribosomal subunit protein bS18c of Zygnema circumcarinatum (Green alga).